A 70-amino-acid polypeptide reads, in one-letter code: Putative membrane protein insertion efficiency factor (70 aa).

This sequence belongs to the UPF0161 family.

Its subcellular location is the cell inner membrane. Could be involved in insertion of integral membrane proteins into the membrane. The sequence is that of Putative membrane protein insertion efficiency factor from Geobacter sp. (strain M21).